A 118-amino-acid polypeptide reads, in one-letter code: MASGMGVDENCVARFNELKIRKTVKWIVFKIENTKIVVEKDGKGNADEFRGALPANDCRFAVYNCGNKIQFVLWCPDNAPVKPRMTYASSKDALLKKLDGATAVALEAHEMGDLAPLA.

Residues 4 to 118 form the ADF-H domain; it reads GMGVDENCVA…HEMGDLAPLA (115 aa).

It belongs to the actin-binding proteins ADF family. As to quaternary structure, interacts with ACT1 (G-actin); the interaction results in inhibition of actin polymerization. Interacts with DPA; the interaction enhances ADF activity in disassembly of filamentous actin and inhibition of actin polymerization.

Its subcellular location is the cytoplasm. In terms of biological role, inhibits actin polymerization. Promotes actin depolymerization. Strongly sequesters actin monomers (G-actin). Weakly severs actin filaments (F-actin). In Toxoplasma gondii, this protein is Actin depolymerizing factor ADF.